The following is a 667-amino-acid chain: Probable potassium transport system protein Kup (667 aa).

12 helical membrane passes run glycine 16–methionine 36, valine 58–leucine 78, tryptophan 101–proline 121, threonine 146–glycine 166, threonine 167–isoleucine 187, isoleucine 221–leucine 241, tryptophan 253–alanine 273, valine 294–glycine 314, leucine 343–phenylalanine 363, tyrosine 373–isoleucine 393, proline 399–alanine 419, and phenylalanine 424–isoleucine 444.

The protein belongs to the HAK/KUP transporter (TC 2.A.72) family.

Its subcellular location is the cell membrane. It carries out the reaction K(+)(in) + H(+)(in) = K(+)(out) + H(+)(out). Transport of potassium into the cell. Likely operates as a K(+):H(+) symporter. In Streptococcus equi subsp. equi (strain 4047), this protein is Probable potassium transport system protein Kup.